The primary structure comprises 81 residues: MNQEIFDKIKNIIVDQLDVDADSVSPESNFISDLDADSLDTVELVMAFEEEFDIDIPDDVAEKITTVGEAVNIIAEKTGAN.

Positions 3–78 (QEIFDKIKNI…EAVNIIAEKT (76 aa)) constitute a Carrier domain. At serine 38 the chain carries O-(pantetheine 4'-phosphoryl)serine.

It belongs to the acyl carrier protein (ACP) family. 4'-phosphopantetheine is transferred from CoA to a specific serine of apo-ACP by AcpS. This modification is essential for activity because fatty acids are bound in thioester linkage to the sulfhydryl of the prosthetic group.

It localises to the cytoplasm. Its pathway is lipid metabolism; fatty acid biosynthesis. Its function is as follows. Carrier of the growing fatty acid chain in fatty acid biosynthesis. In Picosynechococcus sp. (strain ATCC 27264 / PCC 7002 / PR-6) (Agmenellum quadruplicatum), this protein is Acyl carrier protein.